The following is a 499-amino-acid chain: Putative ribose/galactose/methyl galactoside import ATP-binding protein 3 (499 aa).

2 ABC transporter domains span residues 8–243 (LRMR…VGRE) and 253–497 (SKIG…TGEE). 40–47 (GENGAGKS) is an ATP binding site.

Belongs to the ABC transporter superfamily. Carbohydrate importer 2 (CUT2) (TC 3.A.1.2) family.

Its subcellular location is the cell inner membrane. It catalyses the reaction D-ribose(out) + ATP + H2O = D-ribose(in) + ADP + phosphate + H(+). The catalysed reaction is D-galactose(out) + ATP + H2O = D-galactose(in) + ADP + phosphate + H(+). Its function is as follows. Part of an ABC transporter complex involved in carbohydrate import. Could be involved in ribose, galactose and/or methyl galactoside import. Responsible for energy coupling to the transport system. The chain is Putative ribose/galactose/methyl galactoside import ATP-binding protein 3 from Agrobacterium fabrum (strain C58 / ATCC 33970) (Agrobacterium tumefaciens (strain C58)).